Consider the following 270-residue polypeptide: UPF0354 protein BPUM_2629 (270 aa).

The protein belongs to the UPF0354 family.

The protein is UPF0354 protein BPUM_2629 of Bacillus pumilus (strain SAFR-032).